The following is a 257-amino-acid chain: MPCHNQQLNNNSESPEHAAKHVRFAQSSAAAAETCQNDAEQPEYQTTSEIHQQIGPQLKLLPLNDQIRELQTIIRDKTTSRGDFVFCADRLIRLVVEEGLNQLPYSECTVTTPTGHKYEGVKFEKGNCGVSIMRSGEAMEQGLRDCCRSIRIGKILIQSDEETQKAKVYYAKFPPDISRRKVLLMYPILSTGNTVIEAVRVLTEHGLQAKHIILLSLFSTPHGARSIVQEFPDITILTTEVHAVAPTHFGQRYFGTD.

Residues Arg-81, Arg-90, and Glu-124–Asn-127 each bind GTP. Residue Arg-134 coordinates 5-phospho-alpha-D-ribose 1-diphosphate. GTP is bound by residues Arg-151 and Arg-180. Tyr-186–Thr-194 is a binding site for 5-phospho-alpha-D-ribose 1-diphosphate. Thr-247 to Phe-249 serves as a coordination point for uracil.

The protein belongs to the UPRTase family.

Its subcellular location is the cytoplasm. The protein resides in the nucleus. This chain is Uracil phosphoribosyltransferase homolog (uprt), found in Danio rerio (Zebrafish).